A 720-amino-acid polypeptide reads, in one-letter code: Zinc finger protein 408 (720 aa).

The tract at residues V201–G350 is disordered. A compositionally biased stretch (polar residues) spans L275–P285. Residues G287–A296 show a composition bias toward low complexity. T322 carries the post-translational modification Phosphothreonine. 10 consecutive C2H2-type zinc fingers follow at residues Y353 to H375, F381 to H403, F409 to H431, F437 to H459, C468 to H490, F496 to H518, Y524 to H546, H551 to H573, F579 to H601, and Y607 to H629.

In terms of tissue distribution, highest expression is observed in adult retina; abundantly expressed in the fetal eye. In the retina, it is detected in the outer nuclear layer, especially cone and rod photoreceptor cells, ganglion cell layer and both outer and inner plexiform layers (at protein level). Expressed in retinal blood vessels (at protein level).

It localises to the nucleus. May be involved in transcriptional regulation. The polypeptide is Zinc finger protein 408 (ZNF408) (Homo sapiens (Human)).